The following is a 153-amino-acid chain: SsrA-binding protein (153 aa).

The protein belongs to the SmpB family.

The protein resides in the cytoplasm. Its function is as follows. Required for rescue of stalled ribosomes mediated by trans-translation. Binds to transfer-messenger RNA (tmRNA), required for stable association of tmRNA with ribosomes. tmRNA and SmpB together mimic tRNA shape, replacing the anticodon stem-loop with SmpB. tmRNA is encoded by the ssrA gene; the 2 termini fold to resemble tRNA(Ala) and it encodes a 'tag peptide', a short internal open reading frame. During trans-translation Ala-aminoacylated tmRNA acts like a tRNA, entering the A-site of stalled ribosomes, displacing the stalled mRNA. The ribosome then switches to translate the ORF on the tmRNA; the nascent peptide is terminated with the 'tag peptide' encoded by the tmRNA and targeted for degradation. The ribosome is freed to recommence translation, which seems to be the essential function of trans-translation. The protein is SsrA-binding protein of Paramagnetospirillum magneticum (strain ATCC 700264 / AMB-1) (Magnetospirillum magneticum).